We begin with the raw amino-acid sequence, 479 residues long: Anaerobic nitric oxide reductase flavorubredoxin (479 aa).

The segment at 30–210 (LRGSSYNSYL…PFSRLVTPKI (181 aa)) is zinc metallo-hydrolase. Fe cation is bound by residues His79, Glu81, Asp83, His147, Asp166, and His227. A Flavodoxin-like domain is found at 254–393 (ITIFYDTMSN…LCRQHGRDIA (140 aa)). FMN contacts are provided by residues 260 to 264 (TMSNN) and 342 to 369 (AFGSHGWSGGAVDRLSTRLQDAGFEMSL). The region spanning 423-474 (GPKMQCSVCQWIYDPALGEPLQDVAPGTPWSDVPDNFLCPECSLGKDVFDVL) is the Rubredoxin-like domain. Fe cation is bound by residues Cys428, Cys431, Cys461, and Cys464.

This sequence in the N-terminal section; belongs to the zinc metallo-hydrolase group 3 family. Homotetramer. The cofactor is Fe cation. It depends on FMN as a cofactor.

It is found in the cytoplasm. It functions in the pathway nitrogen metabolism; nitric oxide reduction. Functionally, anaerobic nitric oxide reductase; uses NADH to detoxify nitric oxide (NO), protecting several 4Fe-4S NO-sensitive enzymes. Has at least 2 reductase partners, only one of which (NorW, flavorubredoxin reductase) has been identified. NO probably binds to the di-iron center; electrons enter from the NorW at rubredoxin and are transferred sequentially to the FMN center and the di-iron center. Also able to function as an aerobic oxygen reductase. In Salmonella arizonae (strain ATCC BAA-731 / CDC346-86 / RSK2980), this protein is Anaerobic nitric oxide reductase flavorubredoxin.